We begin with the raw amino-acid sequence, 195 residues long: Imidazoleglycerol-phosphate dehydratase (195 aa).

This sequence belongs to the imidazoleglycerol-phosphate dehydratase family.

It is found in the cytoplasm. It catalyses the reaction D-erythro-1-(imidazol-4-yl)glycerol 3-phosphate = 3-(imidazol-4-yl)-2-oxopropyl phosphate + H2O. It participates in amino-acid biosynthesis; L-histidine biosynthesis; L-histidine from 5-phospho-alpha-D-ribose 1-diphosphate: step 6/9. The polypeptide is Imidazoleglycerol-phosphate dehydratase (Geobacillus thermodenitrificans (strain NG80-2)).